A 196-amino-acid chain; its full sequence is UDP-N-acetylglucosamine transferase subunit ALG13 (196 aa).

The protein belongs to the glycosyltransferase 28 family. In terms of assembly, heterodimer with ALG14 to form a functional enzyme.

The protein localises to the endoplasmic reticulum. The enzyme catalyses an N-acetyl-alpha-D-glucosaminyl-diphospho-di-trans,poly-cis-dolichol + UDP-N-acetyl-alpha-D-glucosamine = an N,N'-diacetylchitobiosyl-diphospho-di-trans,poly-cis-dolichol + UDP + H(+). Involved in protein N-glycosylation. Essential for the second step of the dolichol-linked oligosaccharide pathway. In Yarrowia lipolytica (strain CLIB 122 / E 150) (Yeast), this protein is UDP-N-acetylglucosamine transferase subunit ALG13 (ALG13).